The primary structure comprises 358 residues: Na(+)/H(+) exchange regulatory cofactor NHE-RF1 (358 aa).

Ser-2 carries the N-acetylserine modification. A phosphoserine mark is found at Ser-2 and Ser-46. In terms of domain architecture, PDZ 1 spans 14–94; it reads LCCLEKGPNG…AVRLLVVDPE (81 aa). A compositionally biased stretch (low complexity) spans 114-132; the sequence is QEAPGQAEPPAAAEVQGAG. The disordered stretch occupies residues 114–192; that stretch reads QEAPGQAEPP…DPDSPAEASG (79 aa). The segment covering 135 to 152 has biased composition (basic and acidic residues); that stretch reads NEPREADKSHPEQRELRP. One can recognise a PDZ 2 domain in the interval 154–234; that stretch reads LCTMKKGPSG…ETKLLVVDRE (81 aa). Ser-162, Ser-269, Ser-280, Ser-290, and Ser-291 each carry phosphoserine. Positions 277–358 are disordered; the sequence is ALESPRPALV…SKKNELFSNL (82 aa). A compositionally biased stretch (polar residues) spans 288–306; sequence SASSDTSEELNSQDSPPKQ. At Thr-293 the chain carries Phosphothreonine. Phosphoserine occurs at positions 294, 299, and 302. The segment covering 307–319 has biased composition (low complexity); the sequence is DSTAPSSTSSSDP. A compositionally biased stretch (basic and acidic residues) spans 348–358; sequence WSKKNELFSNL.

In terms of assembly, homodimer, and heterodimer with NHERF2. Binds the N-termini of EZR, RDX and MSN. Binds the C-termini of PDGFRA, PDGFRB, ADRB2, NOS2 and CFTR. Binds ARHGAP17, EPI64, RACK1, OPRK1, GNAQ, CTNNB1 and PLCB3. Binds PDZK1. Interacts with CLCN3. Binds the C-terminus of PAG1. In resting T-cells, part of a PAG1-NHERF1-MSN complex which is disrupted upon TCR activation. Forms a complex with CFTR and SLC4A7. Forms a complex with SLC4A7 and ATP6V1B1. Interacts with TRPC4 (via the PDZ-binding domain). Directly interacts with HTR4. Interacts (via the PDZ 1 domain) with PODXL (via the C-terminal PDZ-binding motif DTHL); interaction is not detected in glomerular epithelium cells. Interacts (via the PDZ 1 domain) with PODXL (via the C-terminal PDZ-binding motif DTHL); the interaction take place early in the secretory pathway and is necessary for its apical membrane sorting. Interacts with SLC26A3. Interacts with MCC. Interacts with SLC34A1. Interacts (via the PDZ domains) with SLC26A6 isoform 4 and isoform 5. Interacts (via PDZ domains) with ACE2 (via PDZ-binding motif); the interaction may enhance ACE2 membrane residence. Post-translationally, phosphorylated on serine residues. Detected in liver, kidney, pancreas, prostate, spleen, small intestine and placenta, in particular in the syncytiotrophoblast.

It localises to the cytoplasm. The protein resides in the apical cell membrane. It is found in the endomembrane system. The protein localises to the cell projection. Its subcellular location is the filopodium. It localises to the ruffle. The protein resides in the microvillus. Functionally, scaffold protein that connects plasma membrane proteins with members of the ezrin/moesin/radixin family and thereby helps to link them to the actin cytoskeleton and to regulate their surface expression. Necessary for recycling of internalized ADRB2. Was first known to play a role in the regulation of the activity and subcellular location of SLC9A3. Necessary for cAMP-mediated phosphorylation and inhibition of SLC9A3. May enhance Wnt signaling. May participate in HTR4 targeting to microvilli. Involved in the regulation of phosphate reabsorption in the renal proximal tubules. Involved in sperm capacitation. May participate in the regulation of the chloride and bicarbonate homeostasis in spermatozoa. The chain is Na(+)/H(+) exchange regulatory cofactor NHE-RF1 from Homo sapiens (Human).